Reading from the N-terminus, the 568-residue chain is Clathrin coat assembly protein AP180B (568 aa).

The region spanning 1–127 is the ENTH domain; that stretch reads MSSLYTKLVK…EEYGRLGMDH (127 aa). Basic and acidic residues predominate over residues 262–283; that stretch reads HLREETKRQRGEPSEPQQDRKP. The segment at 262 to 302 is disordered; the sequence is HLREETKRQRGEPSEPQQDRKPSTAISSTSSHNNNSNDKNK. Residue Lys-282 forms a Glycyl lysine isopeptide (Lys-Gly) (interchain with G-Cter in ubiquitin) linkage. Over residues 284-298 the composition is skewed to low complexity; it reads STAISSTSSHNNNSN. Position 449 is a phosphothreonine (Thr-449).

The protein belongs to the AP180 family. Interacts with PAN1 and the clathrin heavy and light chains CHC1 and CLC1.

The protein localises to the bud. Its subcellular location is the bud neck. The protein resides in the cell membrane. It is found in the cytoplasm. Involved in endocytosis and clathrin cage assembly. This chain is Clathrin coat assembly protein AP180B (YAP1802), found in Saccharomyces cerevisiae (strain ATCC 204508 / S288c) (Baker's yeast).